Reading from the N-terminus, the 369-residue chain is 3-isopropylmalate dehydrogenase (369 aa).

NAD(+) is bound at residue glycine 77–glutamate 90. The substrate site is built by arginine 97, arginine 107, arginine 135, and aspartate 226. The Mg(2+) site is built by aspartate 226, aspartate 250, and aspartate 254. Position 289 to 301 (glycine 289 to asparagine 301) interacts with NAD(+).

Belongs to the isocitrate and isopropylmalate dehydrogenases family. LeuB type 1 subfamily. In terms of assembly, homodimer. Mg(2+) serves as cofactor. Requires Mn(2+) as cofactor.

It is found in the cytoplasm. It catalyses the reaction (2R,3S)-3-isopropylmalate + NAD(+) = 4-methyl-2-oxopentanoate + CO2 + NADH. It functions in the pathway amino-acid biosynthesis; L-leucine biosynthesis; L-leucine from 3-methyl-2-oxobutanoate: step 3/4. Its function is as follows. Catalyzes the oxidation of 3-carboxy-2-hydroxy-4-methylpentanoate (3-isopropylmalate) to 3-carboxy-4-methyl-2-oxopentanoate. The product decarboxylates to 4-methyl-2 oxopentanoate. The polypeptide is 3-isopropylmalate dehydrogenase (Cereibacter sphaeroides (strain ATCC 17023 / DSM 158 / JCM 6121 / CCUG 31486 / LMG 2827 / NBRC 12203 / NCIMB 8253 / ATH 2.4.1.) (Rhodobacter sphaeroides)).